A 233-amino-acid polypeptide reads, in one-letter code: Orotidine 5'-phosphate decarboxylase (233 aa).

Substrate-binding positions include Asp9, Lys31, 58 to 67 (DLKLHDIPNT), Thr120, Arg182, Gln191, Gly211, and Arg212. Lys60 (proton donor) is an active-site residue.

This sequence belongs to the OMP decarboxylase family. Type 1 subfamily. Homodimer.

It carries out the reaction orotidine 5'-phosphate + H(+) = UMP + CO2. It functions in the pathway pyrimidine metabolism; UMP biosynthesis via de novo pathway; UMP from orotate: step 2/2. Its function is as follows. Catalyzes the decarboxylation of orotidine 5'-monophosphate (OMP) to uridine 5'-monophosphate (UMP). This Listeria monocytogenes serotype 4b (strain CLIP80459) protein is Orotidine 5'-phosphate decarboxylase.